The primary structure comprises 452 residues: Probable glycine dehydrogenase (decarboxylating) subunit 1 (452 aa).

It belongs to the GcvP family. N-terminal subunit subfamily. As to quaternary structure, the glycine cleavage system is composed of four proteins: P, T, L and H. In this organism, the P 'protein' is a heterodimer of two subunits.

It carries out the reaction N(6)-[(R)-lipoyl]-L-lysyl-[glycine-cleavage complex H protein] + glycine + H(+) = N(6)-[(R)-S(8)-aminomethyldihydrolipoyl]-L-lysyl-[glycine-cleavage complex H protein] + CO2. Functionally, the glycine cleavage system catalyzes the degradation of glycine. The P protein binds the alpha-amino group of glycine through its pyridoxal phosphate cofactor; CO(2) is released and the remaining methylamine moiety is then transferred to the lipoamide cofactor of the H protein. The protein is Probable glycine dehydrogenase (decarboxylating) subunit 1 of Nitrosospira multiformis (strain ATCC 25196 / NCIMB 11849 / C 71).